Reading from the N-terminus, the 222-residue chain is Countin-3 (222 aa).

Residues 1 to 20 form the signal peptide; sequence MNKILSLFLITILLISKVMS. The Saposin B-type domain maps to 21 to 105; the sequence is SSEECKLCTD…ESVKMCQYND (85 aa). 3 cysteine pairs are disulfide-bonded: cysteine 25–cysteine 101, cysteine 28–cysteine 95, and cysteine 56–cysteine 68. Asparagine 108, asparagine 134, and asparagine 218 each carry an N-linked (GlcNAc...) asparagine glycan.

It belongs to the countin family.

Its subcellular location is the secreted. Functionally, may control the size of the multicellular structure. The protein is Countin-3 (ctnC) of Dictyostelium discoideum (Social amoeba).